We begin with the raw amino-acid sequence, 111 residues long: Large ribosomal subunit protein uL29 (111 aa).

The interval 1 to 85 (MTVAKELRQK…TKKTNEAAVN (85 aa)) is large ribosomal subunit protein uL29. A unknown region spans residues 86-111 (AWKQHLEANKAKLLKSRAKREDASKK).

This sequence belongs to the universal ribosomal protein uL29 family.

The protein is Large ribosomal subunit protein uL29 of Mycoplasma pneumoniae (strain ATCC 29342 / M129 / Subtype 1) (Mycoplasmoides pneumoniae).